Here is a 292-residue protein sequence, read N- to C-terminus: MSEIRLYVSTTESQAEQILDLLSEVFGEEDFAIGTTEVDEKRDIWEASVYMMAEDEAQVRSRVETALKSGFPDAQLLREVIPDVDWVVKSLEGLKPVRAGRFLVHGSHDRDKVRPGDIAIEIDAGQAFGTGHHGTTAGCLEVIDRVVRSRRVRNALDLGTGSGVLAIAVRKLKNIPVLATDIDPIATRVAAENVRRNGIASGIVTRTAPGFHSTAFSEHGPFDLIIANILARPLIRMAPQLAAHLAPAGSVILSGILAAQRWKVIAAYSGARLRHVRTIWRNGWVTIHFDRP.

S-adenosyl-L-methionine-binding residues include T136, G159, D181, and N228.

This sequence belongs to the methyltransferase superfamily. PrmA family.

The protein resides in the cytoplasm. The catalysed reaction is L-lysyl-[protein] + 3 S-adenosyl-L-methionine = N(6),N(6),N(6)-trimethyl-L-lysyl-[protein] + 3 S-adenosyl-L-homocysteine + 3 H(+). Methylates ribosomal protein L11. The sequence is that of Ribosomal protein L11 methyltransferase from Rhizobium etli (strain CIAT 652).